Here is a 203-residue protein sequence, read N- to C-terminus: Inactive ribonuclease-like protein 9 (203 aa).

The signal sequence occupies residues 1-25; it reads MRTPITTHSLLLLLLLQQLLQPVQL. 3 disulfide bridges follow: Cys-96–Cys-151, Cys-114–Cys-166, and Cys-121–Cys-128. N-linked (GlcNAc...) asparagine glycosylation is found at Asn-129 and Asn-141.

The protein belongs to the pancreatic ribonuclease family.

It is found in the secreted. Does not exhibit any ribonuclease activity. The sequence is that of Inactive ribonuclease-like protein 9 (RNASE9) from Macaca assamensis (Assam macaque).